Consider the following 217-residue polypeptide: Snake venom metalloproteinase lebetase-4 (217 aa).

Residues 1–14 (SCRKKASQLNLTPE) constitute a propeptide that is removed on maturation. Gln-15 carries the pyrrolidone carboxylic acid modification. Residues 21-217 (RYIELVIVAD…HNPQCILNQP (197 aa)) form the Peptidase M12B domain. Ca(2+)-binding residues include Glu-24 and Asp-108. 3 disulfide bridges follow: Cys-132–Cys-212, Cys-172–Cys-196, and Cys-174–Cys-179. Position 157 (His-157) interacts with Zn(2+). Residue Glu-158 is part of the active site. Positions 161 and 167 each coordinate Zn(2+). Ca(2+)-binding residues include Cys-212 and Asn-215.

Belongs to the venom metalloproteinase (M12B) family. P-I subfamily. In terms of assembly, monomer. It depends on Zn(2+) as a cofactor. As to expression, expressed by the venom gland.

Its subcellular location is the secreted. Fibrinolytic and caseinolytic activities are inhibited by Cd(2+), Cu(2+) and Co(2+) ions. Not inhibited by Mg(2+), Ca(2+) and Ba(2+). Also inhibited by EDTA, EGTA and 1,10-phenanthroline. Snake venom zinc metalloprotease that hydrolyzes the Aalpha-chain and more slowly the Bbeta-chain of fibrin and fibrinogen. Also hydrolyzes casein and B-chain of oxidized insulin. Its fibrinolytic activity is direct, without any plasminogen activation. Inhibits ADP-induced and collagen-induced platelet aggregation. Shows low hemorrhagic activity. Cleaves the plasma proteinase inhibitors alpha(2)-macroglobulin (A2M) and alpha(2)M-related pregnancy zone protein (PZP), and is inhibited by them. This Macrovipera lebetinus (Levantine viper) protein is Snake venom metalloproteinase lebetase-4.